A 189-amino-acid polypeptide reads, in one-letter code: MEILTTTFLSLGLAADAFAVSLTSGFSIKHIKLNKALKIALFFGCFQAIMPFIGWSAGLTFRDFISSFDHWIAFGLLSYIGGKMIYESMEEEKEDKKFNPLDSYTLTTLAIATSIDALAAGIGLSVLKGSILLACTLIGFITFGLCFIGVFIGHRFGDILNQKIEIVGGVVLILIGTKILLEHLGFSLV.

6 helical membrane-spanning segments follow: residues 8–28 (FLSLGLAADAFAVSLTSGFSI), 39–59 (IALFFGCFQAIMPFIGWSAGL), 65–85 (ISSFDHWIAFGLLSYIGGKMI), 106–126 (LTTLAIATSIDALAAGIGLSV), 131–151 (ILLACTLIGFITFGLCFIGVF), and 166–186 (IVGGVVLILIGTKILLEHLGF).

It belongs to the MntP (TC 9.B.29) family.

The protein localises to the cell inner membrane. In terms of biological role, probably functions as a manganese efflux pump. The sequence is that of Putative manganese efflux pump MntP from Gloeothece citriformis (strain PCC 7424) (Cyanothece sp. (strain PCC 7424)).